The sequence spans 302 residues: tRNA pseudouridine synthase B (302 aa).

Catalysis depends on D45, which acts as the Nucleophile.

This sequence belongs to the pseudouridine synthase TruB family. Type 1 subfamily.

It carries out the reaction uridine(55) in tRNA = pseudouridine(55) in tRNA. Its function is as follows. Responsible for synthesis of pseudouridine from uracil-55 in the psi GC loop of transfer RNAs. The polypeptide is tRNA pseudouridine synthase B (Francisella tularensis subsp. novicida (strain U112)).